The chain runs to 321 residues: MRQLYPAIAPYQSGMLPVSALHTIYYEQSGNPNGKPVVFLHGGPGGGTIPTYRQYFDPSKWRIILFDQRGAGKSTPHAELRENTTWDLVSDIEKLRSHLNIDRWFVFGGSWGSTLSLAYSQTHPDRCLGLILRGIFLLRRKEILWFYQDGASWIFPDAWEHYLEPIPPEERDDMISAYYRRLTSKDAEIRSTAAKAWSVWEGTTSRLIVDPSLQSKFADDEFADAFARIECHYFINRGFFETDDQLLQNCDRIAHIPTVIVQGRYDVVCPMTSAWALHKALPESELIVVPDAGHSMMEAGILSALIDATDRFVAQKTNGKI.

In terms of domain architecture, AB hydrolase-1 spans 35-296; the sequence is KPVVFLHGGP…IVVPDAGHSM (262 aa). S110 functions as the Nucleophile in the catalytic mechanism. D266 is a catalytic residue. Catalysis depends on H294, which acts as the Proton donor.

This sequence belongs to the peptidase S33 family.

It localises to the cytoplasm. It carries out the reaction Release of N-terminal proline from a peptide.. Specifically catalyzes the removal of N-terminal proline residues from peptides. This chain is Probable proline iminopeptidase (pip), found in Leptolyngbya boryana (Plectonema boryanum).